Consider the following 301-residue polypeptide: 4-hydroxybenzoate octaprenyltransferase (301 aa).

The next 7 membrane-spanning stretches (helical) occupy residues 34–54 (IGSL…AGGL), 57–77 (LWTL…GCVI), 108–128 (LWVF…LNWL), 163–183 (WGIP…AWLL), 222–242 (DLIA…LVGL), 248–268 (IAYW…FHIA), and 280–300 (FLHN…SLAL).

It belongs to the UbiA prenyltransferase family. Mg(2+) serves as cofactor.

It is found in the cell inner membrane. The catalysed reaction is all-trans-octaprenyl diphosphate + 4-hydroxybenzoate = 4-hydroxy-3-(all-trans-octaprenyl)benzoate + diphosphate. Its pathway is cofactor biosynthesis; ubiquinone biosynthesis. Its function is as follows. Catalyzes the prenylation of para-hydroxybenzoate (PHB) with an all-trans polyprenyl group. Mediates the second step in the final reaction sequence of ubiquinone-8 (UQ-8) biosynthesis, which is the condensation of the polyisoprenoid side chain with PHB, generating the first membrane-bound Q intermediate 3-octaprenyl-4-hydroxybenzoate. This chain is 4-hydroxybenzoate octaprenyltransferase, found in Xanthomonas campestris pv. campestris (strain 8004).